The following is a 251-amino-acid chain: 3-deoxy-manno-octulosonate cytidylyltransferase (251 aa).

The protein belongs to the KdsB family.

The protein resides in the cytoplasm. It carries out the reaction 3-deoxy-alpha-D-manno-oct-2-ulosonate + CTP = CMP-3-deoxy-beta-D-manno-octulosonate + diphosphate. Its pathway is nucleotide-sugar biosynthesis; CMP-3-deoxy-D-manno-octulosonate biosynthesis; CMP-3-deoxy-D-manno-octulosonate from 3-deoxy-D-manno-octulosonate and CTP: step 1/1. It participates in bacterial outer membrane biogenesis; lipopolysaccharide biosynthesis. Its function is as follows. Activates KDO (a required 8-carbon sugar) for incorporation into bacterial lipopolysaccharide in Gram-negative bacteria. The polypeptide is 3-deoxy-manno-octulosonate cytidylyltransferase (Alcanivorax borkumensis (strain ATCC 700651 / DSM 11573 / NCIMB 13689 / SK2)).